The following is a 375-amino-acid chain: tRNA-specific 2-thiouridylase MnmA (375 aa).

ATP is bound by residues 13–20 and Met-39; that span reads AMSGGVDS. Cys-111 serves as the catalytic Nucleophile. Residues Cys-111 and Cys-208 are joined by a disulfide bond. ATP is bound at residue Gly-135. The interaction with tRNA stretch occupies residues 158–160; that stretch reads KDQ. Cys-208 serves as the catalytic Cysteine persulfide intermediate. An interaction with tRNA region spans residues 313–314; it reads RY.

It belongs to the MnmA/TRMU family.

It localises to the cytoplasm. It carries out the reaction S-sulfanyl-L-cysteinyl-[protein] + uridine(34) in tRNA + AH2 + ATP = 2-thiouridine(34) in tRNA + L-cysteinyl-[protein] + A + AMP + diphosphate + H(+). Functionally, catalyzes the 2-thiolation of uridine at the wobble position (U34) of tRNA, leading to the formation of s(2)U34. This chain is tRNA-specific 2-thiouridylase MnmA, found in Geotalea uraniireducens (strain Rf4) (Geobacter uraniireducens).